Reading from the N-terminus, the 211-residue chain is dITP/XTP pyrophosphatase (211 aa).

7–12 (TSNKKK) contacts substrate. Residues Glu-43 and Asp-72 each contribute to the Mg(2+) site. Asp-72 (proton acceptor) is an active-site residue. Residues Ser-73, 169-172 (FGYD), Lys-190, and 195-196 (HR) contribute to the substrate site.

It belongs to the HAM1 NTPase family. Homodimer. It depends on Mg(2+) as a cofactor.

The enzyme catalyses XTP + H2O = XMP + diphosphate + H(+). The catalysed reaction is dITP + H2O = dIMP + diphosphate + H(+). It catalyses the reaction ITP + H2O = IMP + diphosphate + H(+). Pyrophosphatase that catalyzes the hydrolysis of nucleoside triphosphates to their monophosphate derivatives, with a high preference for the non-canonical purine nucleotides XTP (xanthosine triphosphate), dITP (deoxyinosine triphosphate) and ITP. Seems to function as a house-cleaning enzyme that removes non-canonical purine nucleotides from the nucleotide pool, thus preventing their incorporation into DNA/RNA and avoiding chromosomal lesions. The polypeptide is dITP/XTP pyrophosphatase (Hydrogenobaculum sp. (strain Y04AAS1)).